The chain runs to 177 residues: Co-chaperone protein HscB homolog (177 aa).

Residues 8–80 (DYFSLFGMPR…LSRAQYLLEL (73 aa)) enclose the J domain.

This sequence belongs to the HscB family. In terms of assembly, interacts with HscA and stimulates its ATPase activity.

In terms of biological role, co-chaperone involved in the maturation of iron-sulfur cluster-containing proteins. Seems to help targeting proteins to be folded toward HscA. This Azoarcus sp. (strain BH72) protein is Co-chaperone protein HscB homolog.